The sequence spans 194 residues: ATP-dependent Clp protease proteolytic subunit (194 aa).

Catalysis depends on S98, which acts as the Nucleophile. H123 is an active-site residue.

The protein belongs to the peptidase S14 family. In terms of assembly, fourteen ClpP subunits assemble into 2 heptameric rings which stack back to back to give a disk-like structure with a central cavity, resembling the structure of eukaryotic proteasomes.

It localises to the cytoplasm. The enzyme catalyses Hydrolysis of proteins to small peptides in the presence of ATP and magnesium. alpha-casein is the usual test substrate. In the absence of ATP, only oligopeptides shorter than five residues are hydrolyzed (such as succinyl-Leu-Tyr-|-NHMec, and Leu-Tyr-Leu-|-Tyr-Trp, in which cleavage of the -Tyr-|-Leu- and -Tyr-|-Trp bonds also occurs).. Functionally, cleaves peptides in various proteins in a process that requires ATP hydrolysis. Has a chymotrypsin-like activity. Plays a major role in the degradation of misfolded proteins. This chain is ATP-dependent Clp protease proteolytic subunit, found in Staphylococcus epidermidis (strain ATCC 35984 / DSM 28319 / BCRC 17069 / CCUG 31568 / BM 3577 / RP62A).